The chain runs to 625 residues: Tyrosine-protein kinase ITK/TSK (625 aa).

A PH domain is found at 4–117 (FILLEEQLIK…WVLTLKEETR (114 aa)). The segment at 119–155 (NNSLVSKYHPNFWMDGRWRCCSQLEKPAVGCAPYDPS) adopts a Btk-type zinc-finger fold. Residues His-127, Cys-138, Cys-139, and Cys-149 each coordinate Zn(2+). The interval 153 to 174 (DPSKNASKKPLPPTPEDNRRSF) is disordered. The SH3 domain occupies 177–237 (PEETLVIALY…PSSYLVEKSP (61 aa)). Tyr-186 carries the post-translational modification Phosphotyrosine; by autocatalysis. Positions 245 to 343 (WYNKSISRDK…GLVTRLRYPV (99 aa)) constitute an SH2 domain. The Protein kinase domain maps to 368–620 (LTFVQEIGSG…SQLLSQLAEI (253 aa)). Residues 374–382 (IGSGQFGLV) and Lys-396 contribute to the ATP site. Asp-487 acts as the Proton acceptor in catalysis. Residue Tyr-517 is modified to Phosphotyrosine; by LCK. At Ser-570 the chain carries Phosphoserine.

The protein belongs to the protein kinase superfamily. Tyr protein kinase family. TEC subfamily. As to quaternary structure, homooligomerizes; this association negatively regulates kinase activity. Interacts with PPIA/CYPA; this interaction regulates TCR signal strength via a proline-directed conformational switch in ITK. Interacts with THEMIS. Interacts with FASLG. Interacts with VAV1; this interaction is important for VAV1 localization and TCR-induced actin polarization. Interacts with TBX21. The cofactor is Zn(2+). Post-translationally, phosphorylated at Tyr-517 in the activation loop of the kinase domain by LCK. Subsequent autophosphorylation at Tyr-186 leads to the kinase activation. The autophosphorylated Tyr-186 lies within the substrate binding sequence of the SH3 domain. In terms of processing, ubiquitinated. In terms of tissue distribution, is detected in the thymus, lymph node and very faintly in the spleen, but is not detected in the liver, lung, kidney, heart, brain, intestine or testis. Expressed in T-lymphocytes and mast cells. It may also be expressed in natural killer cells.

The protein localises to the cytoplasm. It is found in the nucleus. The catalysed reaction is L-tyrosyl-[protein] + ATP = O-phospho-L-tyrosyl-[protein] + ADP + H(+). Its function is as follows. Tyrosine kinase that plays an essential role in regulation of the adaptive immune response. Regulates the development, function and differentiation of conventional T-cells and nonconventional NKT-cells. When antigen presenting cells (APC) activate T-cell receptor (TCR), a series of phosphorylation lead to the recruitment of ITK to the cell membrane, in the vicinity of the stimulated TCR receptor, where it is phosphorylated by LCK. Phosphorylation leads to ITK autophosphorylation and full activation. Once activated, phosphorylates PLCG1, leading to the activation of this lipase and subsequent cleavage of its substrates. In turn, the endoplasmic reticulum releases calcium in the cytoplasm and the nuclear activator of activated T-cells (NFAT) translocates into the nucleus to perform its transcriptional duty. Phosphorylates 2 essential adapter proteins: the linker for activation of T-cells/LAT protein and LCP2. Then, a large number of signaling molecules such as VAV1 are recruited and ultimately lead to lymphokine production, T-cell proliferation and differentiation. Required for TCR-mediated calcium response in gamma-delta T-cells, may also be involved in the modulation of the transcriptomic signature in the Vgamma2-positive subset of immature gamma-delta T-cells. Phosphorylates TBX21 at 'Tyr-525' and mediates its interaction with GATA3. This chain is Tyrosine-protein kinase ITK/TSK (Itk), found in Mus musculus (Mouse).